Here is a 240-residue protein sequence, read N- to C-terminus: Ribosomal RNA small subunit methyltransferase G (240 aa).

Residues Gly80, Phe85, Ala131–Glu132, and Arg150 contribute to the S-adenosyl-L-methionine site.

It belongs to the methyltransferase superfamily. RNA methyltransferase RsmG family.

Its subcellular location is the cytoplasm. Functionally, specifically methylates the N7 position of a guanine in 16S rRNA. The chain is Ribosomal RNA small subunit methyltransferase G from Dictyoglomus thermophilum (strain ATCC 35947 / DSM 3960 / H-6-12).